We begin with the raw amino-acid sequence, 490 residues long: MDPFVVLVLCLSCLLLLSIWRQSSGRGKLPPGPTPLPVIGNILQIDIKDVSKSLTNLSKIYGPVFTLYFGLERMVVLHGYEVVKEALIDLGEEFSGRGHFPLAERANRGFGIVFSNGKRWKEIRRFSLMTLRNFGMGKRSIEDRVQEEARCLVEELRKTKASPCDPTFILGCAPCNVICSIIFQKRFDYKDQQFLNLMEKLNENIRIVSTPWIQICNNFPTIIDYFPGTHNKLLKNLAFMESDILEKVKEHQESMDINNPRDFIDCFLIKMEKEKQNQQSEFTIENLVITAADLLGAGTETTSTTLRYALLLLLKHPEVTAKVQEEIERVIGRNRSPCMQDRGHMPYTDAVVHEVQRYIDLIPTSLPHAVTCDVKFRNYLIPKGTTILTSLTSVLHDNKEFPNPEMFDPRHFLDEGGNFKKSNYFMPFSAGKRICVGEGLARMELFLFLTFILQNFNLKSLIDPKDLDTTPVVNGFASVPPFYQLCFIPV.

A heme-binding site is contributed by Cys-435.

This sequence belongs to the cytochrome P450 family. Heme serves as cofactor.

The protein localises to the endoplasmic reticulum membrane. Its subcellular location is the microsome membrane. The catalysed reaction is an organic molecule + reduced [NADPH--hemoprotein reductase] + O2 = an alcohol + oxidized [NADPH--hemoprotein reductase] + H2O + H(+). The enzyme catalyses (5Z,8Z,11Z)-eicosatrienoate + reduced [NADPH--hemoprotein reductase] + O2 = 19-hydroxy-(5Z,8Z,11Z)-eicosatrienoate + oxidized [NADPH--hemoprotein reductase] + H2O + H(+). It catalyses the reaction (5Z,8Z,11Z,14Z)-eicosatetraenoate + reduced [NADPH--hemoprotein reductase] + O2 = 19-hydroxy-(5Z,8Z,11Z,14Z)-eicosatetraenoate + oxidized [NADPH--hemoprotein reductase] + H2O + H(+). It carries out the reaction (5Z,8Z,11Z,14Z,17Z)-eicosapentaenoate + reduced [NADPH--hemoprotein reductase] + O2 = 19-hydroxy-(5Z,8Z,11Z,14Z,17Z)-eicosapentaenoate + oxidized [NADPH--hemoprotein reductase] + H2O + H(+). The catalysed reaction is (4Z,7Z,10Z,13Z,16Z,19Z)-docosahexaenoate + reduced [NADPH--hemoprotein reductase] + O2 = 21-hydroxy-(4Z,7Z,10Z,13Z,16Z,19Z)-docosahexaenoate + oxidized [NADPH--hemoprotein reductase] + H2O + H(+). The enzyme catalyses (5Z,8Z,11Z,14Z)-eicosatetraenoate + reduced [NADPH--hemoprotein reductase] + O2 = (8R,9S)-epoxy-(5Z,11Z,14Z)-eicosatrienoate + oxidized [NADPH--hemoprotein reductase] + H2O + H(+). It catalyses the reaction (5Z,8Z,11Z,14Z)-eicosatetraenoate + reduced [NADPH--hemoprotein reductase] + O2 = (11R,12S)-epoxy-(5Z,8Z,14Z)-eicosatrienoate + oxidized [NADPH--hemoprotein reductase] + H2O + H(+). It carries out the reaction (5Z,8Z,11Z,14Z)-eicosatetraenoate + reduced [NADPH--hemoprotein reductase] + O2 = (11S,12R)-epoxy-(5Z,8Z,14Z)-eicosatrienoate + oxidized [NADPH--hemoprotein reductase] + H2O + H(+). The catalysed reaction is (5Z,8Z,11Z,14Z)-eicosatetraenoate + reduced [NADPH--hemoprotein reductase] + O2 = (14R,15S)-epoxy-(5Z,8Z,11Z)-eicosatrienoate + oxidized [NADPH--hemoprotein reductase] + H2O + H(+). The enzyme catalyses (5Z,8Z,11Z,14Z,17Z)-eicosapentaenoate + reduced [NADPH--hemoprotein reductase] + O2 = (17R,18S)-epoxy-(5Z,8Z,11Z,14Z)-eicosatetraenoate + oxidized [NADPH--hemoprotein reductase] + H2O + H(+). It catalyses the reaction (4Z,7Z,10Z,13Z,16Z,19Z)-docosahexaenoate + reduced [NADPH--hemoprotein reductase] + O2 = (19R,20S)-epoxy-(4Z,7Z,10Z,13Z,16Z)-docosapentaenoate + oxidized [NADPH--hemoprotein reductase] + H2O + H(+). It carries out the reaction (4Z,7Z,10Z,13Z,16Z,19Z)-docosahexaenoate + reduced [NADPH--hemoprotein reductase] + O2 = (19S,20R)-epoxy-(4Z,7Z,10Z,13Z,16Z)-docosapentaenoate + oxidized [NADPH--hemoprotein reductase] + H2O + H(+). The catalysed reaction is (4R)-limonene + reduced [NADPH--hemoprotein reductase] + O2 = (1R,5S)-carveol + oxidized [NADPH--hemoprotein reductase] + H2O + H(+). The enzyme catalyses (4S)-limonene + reduced [NADPH--hemoprotein reductase] + O2 = (1S,5R)-carveol + oxidized [NADPH--hemoprotein reductase] + H2O + H(+). It catalyses the reaction (4S)-limonene + reduced [NADPH--hemoprotein reductase] + O2 = (4S)-perillyl alcohol + oxidized [NADPH--hemoprotein reductase] + H2O + H(+). It carries out the reaction fenbendazole + reduced [NADPH--hemoprotein reductase] + O2 = 4'-hydroxyfenbendazole + oxidized [NADPH--hemoprotein reductase] + H2O + H(+). It functions in the pathway lipid metabolism; fatty acid metabolism. It participates in terpene metabolism; (4R)-limonene degradation. In terms of biological role, a cytochrome P450 monooxygenase involved in the metabolism of polyunsaturated fatty acids (PUFA). Mechanistically, uses molecular oxygen inserting one oxygen atom into a substrate, and reducing the second into a water molecule, with two electrons provided by NADPH via cytochrome P450 reductase (NADPH--hemoprotein reductase). Catalyzes the hydroxylation of carbon-hydrogen bonds. Hydroxylates PUFA specifically at the omega-1 position. Catalyzes the epoxidation of double bonds of PUFA. Also metabolizes plant monoterpenes such as limonene. Oxygenates (R)- and (S)-limonene to produce carveol and perillyl alcohol. Responsible for the metabolism of a number of therapeutic agents such as the anticonvulsant drug S-mephenytoin, omeprazole, proguanil, certain barbiturates, diazepam, propranolol, citalopram and imipramine. Hydroxylates fenbendazole at the 4' position. This Homo sapiens (Human) protein is Cytochrome P450 2C19 (CYP2C19).